We begin with the raw amino-acid sequence, 973 residues long: NLR family member X1 (973 aa).

The transit peptide at 1–84 directs the protein to the mitochondrion; that stretch reads MRWGCHLPRT…EAIQRHRRNL (84 aa). The interval 73–554 is required for interaction with MAVS; it reads ATEAIQRHRR…RILPLLFNLL (482 aa). The NACHT domain maps to 158-481; sequence QTVVLYGTVG…LRFFLAPCVE (324 aa). 164–171 contacts ATP; that stretch reads GTVGTGKS. Positions 554-972 are required for the repression of MAVS-induced interferon signaling; that stretch reads LKVVPRVFGR…TLLEQLGGSG (419 aa). One can recognise an LRRNT domain in the interval 665–692; sequence RQVLPPSELLDHLFFHYEFQNQRFSAEV. LRR repeat units follow at residues 693–716, 722–745, 747–775, 776–799, 809–832, 833–855, 856–875, and 876–897; these read LGSLRQLNLAGVRMTPLKCTVVAS, RHPLDEVNLASCQLDPAGLHTLMP, LLRARKLGLQLNNLGPEACRDLRDLLLHD, QCQITTLRLSNNPLTAAGVGVLMD, HLSLLHTDLGDEGLELLAAQLDRN, KQLQELNVAYNGAGDTVALALAK, AARKHPSLELLHLYFNELSS, and EGRQVLRDLGGSGEGGARVVAS. Residues 904 to 968 form the LRRCT domain; it reads VSEYWSVILS…SEVKTLLEQL (65 aa).

It belongs to the NLRP family. In terms of assembly, homohexamer. Interacts with MAVS. Interacts with TUFM.

The protein localises to the mitochondrion outer membrane. Its function is as follows. Participates in antiviral signaling. Acts as a negative regulator of MAVS-mediated antiviral responses, through the inhibition of the virus-induced RLH (RIG-like helicase)-MAVS interaction. Instead, promotes autophagy by interacting with TUFM and subsequently recruiting the autophagy-related proteins ATG5 and ATG12. Also regulates MAVS-dependent NLRP3 inflammasome activation to attenuate apoptosis. Has no inhibitory function on NF-kappa-B signaling pathway, but enhances NF-kappa-B and JUN N-terminal kinase dependent signaling through the production of reactive oxygen species. Regulates viral mediated-inflammation and energy metabolism in a sex-dependent manner. In females, prevents uncontrolled inflammation and energy metabolism and thus, may contribute to the sex differences observed in infectious and inflammatory diseases. The polypeptide is NLR family member X1 (Nlrx1) (Rattus norvegicus (Rat)).